Consider the following 701-residue polypeptide: Mediator of RNA polymerase II transcription subunit 25 (701 aa).

2 disordered regions span residues 277–388 (AAQK…GAQQ) and 580–617 (AAATGNQQAPVTGAPPNQVQGQAQAPGGGMLRLQNPGA). Residues 286 to 306 (ANQQQKNRFGQISTPPFSQSP) are compositionally biased toward polar residues. 2 stretches are compositionally biased toward low complexity: residues 314-367 (PSLS…NNQQ) and 593-604 (APPNQVQGQAQA). The LXXLL motif motif lies at 621-625 (LRSLL). Positions 650–689 (APGGGAQMQPQWRQPHQGPLMVPTGPRGPVTQNPGMPSVS) are disordered. The span at 679-689 (VTQNPGMPSVS) shows a compositional bias: polar residues.

This sequence belongs to the Mediator complex subunit 25 family. In terms of assembly, component of the Mediator complex.

The protein localises to the nucleus. Its function is as follows. Component of the Mediator complex, a coactivator involved in the regulated transcription of nearly all RNA polymerase II-dependent genes. Mediator functions as a bridge to convey information from gene-specific regulatory proteins to the basal RNA polymerase II transcription machinery. Mediator is recruited to promoters by direct interactions with regulatory proteins and serves as a scaffold for the assembly of a functional preinitiation complex with RNA polymerase II and the general transcription factors. The protein is Mediator of RNA polymerase II transcription subunit 25 (med25) of Danio rerio (Zebrafish).